We begin with the raw amino-acid sequence, 394 residues long: Elongation factor Tu 1 (394 aa).

One can recognise a tr-type G domain in the interval 10–204 (KPHVNVGTIG…ALDNYIPEPE (195 aa)). The G1 stretch occupies residues 19-26 (GHVDHGKT). 19 to 26 (GHVDHGKT) is a binding site for GTP. Thr-26 contacts Mg(2+). Residues 60 to 64 (GITIS) form a G2 region. The G3 stretch occupies residues 81 to 84 (DCPG). Residues 81–85 (DCPGH) and 136–139 (NKCD) contribute to the GTP site. The segment at 136 to 139 (NKCD) is G4. Residues 174–176 (SAL) are G5.

The protein belongs to the TRAFAC class translation factor GTPase superfamily. Classic translation factor GTPase family. EF-Tu/EF-1A subfamily. In terms of assembly, monomer.

The protein resides in the cytoplasm. The enzyme catalyses GTP + H2O = GDP + phosphate + H(+). Functionally, GTP hydrolase that promotes the GTP-dependent binding of aminoacyl-tRNA to the A-site of ribosomes during protein biosynthesis. The sequence is that of Elongation factor Tu 1 from Photobacterium profundum (strain SS9).